We begin with the raw amino-acid sequence, 469 residues long: Adenosylhomocysteinase (469 aa).

Residues threonine 63, aspartate 139, and glutamate 164 each contribute to the substrate site. 165–167 (TTT) provides a ligand contact to NAD(+). Positions 194 and 198 each coordinate substrate. NAD(+)-binding positions include asparagine 199, 228 to 233 (GYGDVG), glutamate 251, asparagine 300, 321 to 323 (IGH), and asparagine 375.

It belongs to the adenosylhomocysteinase family. It depends on NAD(+) as a cofactor.

It localises to the cytoplasm. It catalyses the reaction S-adenosyl-L-homocysteine + H2O = L-homocysteine + adenosine. The protein operates within amino-acid biosynthesis; L-homocysteine biosynthesis; L-homocysteine from S-adenosyl-L-homocysteine: step 1/1. Its function is as follows. May play a key role in the regulation of the intracellular concentration of adenosylhomocysteine. The polypeptide is Adenosylhomocysteinase (Ectopseudomonas mendocina (strain ymp) (Pseudomonas mendocina)).